We begin with the raw amino-acid sequence, 99 residues long: Small ribosomal subunit protein uS14 (99 aa).

This sequence belongs to the universal ribosomal protein uS14 family. In terms of assembly, part of the 30S ribosomal subunit. Contacts proteins S3 and S10.

Binds 16S rRNA, required for the assembly of 30S particles and may also be responsible for determining the conformation of the 16S rRNA at the A site. This is Small ribosomal subunit protein uS14 from Bacteroides fragilis (strain ATCC 25285 / DSM 2151 / CCUG 4856 / JCM 11019 / LMG 10263 / NCTC 9343 / Onslow / VPI 2553 / EN-2).